A 931-amino-acid chain; its full sequence is Isoleucine--tRNA ligase (931 aa).

The short motif at 58–68 (PYANGHLHCGH) is the 'HIGH' region element. Glu559 serves as a coordination point for L-isoleucyl-5'-AMP. Positions 600–604 (KLSKS) match the 'KMSKS' region motif. Lys603 lines the ATP pocket. The Zn(2+) site is built by Cys894, Cys897, Cys914, and Cys917.

The protein belongs to the class-I aminoacyl-tRNA synthetase family. IleS type 1 subfamily. Monomer. Zn(2+) serves as cofactor.

It is found in the cytoplasm. The catalysed reaction is tRNA(Ile) + L-isoleucine + ATP = L-isoleucyl-tRNA(Ile) + AMP + diphosphate. Functionally, catalyzes the attachment of isoleucine to tRNA(Ile). As IleRS can inadvertently accommodate and process structurally similar amino acids such as valine, to avoid such errors it has two additional distinct tRNA(Ile)-dependent editing activities. One activity is designated as 'pretransfer' editing and involves the hydrolysis of activated Val-AMP. The other activity is designated 'posttransfer' editing and involves deacylation of mischarged Val-tRNA(Ile). This is Isoleucine--tRNA ligase from Legionella pneumophila (strain Lens).